The chain runs to 183 residues: Shikimate kinase (183 aa).

18 to 23 (GVGKTT) contributes to the ATP binding site. Threonine 22 contributes to the Mg(2+) binding site. Residues aspartate 40, arginine 64, and glycine 86 each coordinate substrate. Position 125 (arginine 125) interacts with ATP. Arginine 143 contacts substrate.

It belongs to the shikimate kinase family. In terms of assembly, monomer. The cofactor is Mg(2+).

Its subcellular location is the cytoplasm. It carries out the reaction shikimate + ATP = 3-phosphoshikimate + ADP + H(+). Its pathway is metabolic intermediate biosynthesis; chorismate biosynthesis; chorismate from D-erythrose 4-phosphate and phosphoenolpyruvate: step 5/7. Functionally, catalyzes the specific phosphorylation of the 3-hydroxyl group of shikimic acid using ATP as a cosubstrate. This is Shikimate kinase from Oceanobacillus iheyensis (strain DSM 14371 / CIP 107618 / JCM 11309 / KCTC 3954 / HTE831).